The following is a 462-amino-acid chain: Protoheme IX farnesyltransferase, mitochondrial (462 aa).

7 helical membrane-spanning segments follow: residues 152–172 (LTIL…YTVS), 173–193 (LPEL…ANAI), 237–257 (MLFL…IVLY), 269–289 (IINT…GWAA), 296–316 (PGAW…FNAL), 348–368 (SLLM…DWVF), and 411–431 (AKKL…LAML).

Belongs to the UbiA prenyltransferase family.

It is found in the mitochondrion membrane. In terms of biological role, converts protoheme IX and farnesyl diphosphate to heme O. The polypeptide is Protoheme IX farnesyltransferase, mitochondrial (COX10) (Debaryomyces hansenii (strain ATCC 36239 / CBS 767 / BCRC 21394 / JCM 1990 / NBRC 0083 / IGC 2968) (Yeast)).